The primary structure comprises 884 residues: Alanine--tRNA ligase (884 aa).

Zn(2+)-binding residues include His572, His576, Cys673, and His677.

Belongs to the class-II aminoacyl-tRNA synthetase family. Requires Zn(2+) as cofactor.

It is found in the cytoplasm. It catalyses the reaction tRNA(Ala) + L-alanine + ATP = L-alanyl-tRNA(Ala) + AMP + diphosphate. Its function is as follows. Catalyzes the attachment of alanine to tRNA(Ala) in a two-step reaction: alanine is first activated by ATP to form Ala-AMP and then transferred to the acceptor end of tRNA(Ala). Also edits incorrectly charged Ser-tRNA(Ala) and Gly-tRNA(Ala) via its editing domain. This chain is Alanine--tRNA ligase, found in Xylella fastidiosa (strain M12).